The primary structure comprises 510 residues: Bifunctional pantoate ligase/cytidylate kinase (510 aa).

A pantoate--beta-alanine ligase region spans residues 1–276 (MKKVIIRKTE…CGETRLIDHV (276 aa)). 29–36 (MGNLHDGH) contributes to the ATP binding site. Residue His36 is the Proton donor of the active site. A (R)-pantoate-binding site is contributed by Gln61. Residue Gln61 coordinates beta-alanine. Position 150–153 (150–153 (GEKD)) interacts with ATP. Gln156 lines the (R)-pantoate pocket. 187-190 (LSSR) is a binding site for ATP. Residues 277 to 510 (FLMKRRPIIA…DRIPKETEIK (234 aa)) are cytidylate kinase.

This sequence in the N-terminal section; belongs to the pantothenate synthetase family. It in the C-terminal section; belongs to the cytidylate kinase family. Type 1 subfamily.

Its subcellular location is the cytoplasm. The catalysed reaction is (R)-pantoate + beta-alanine + ATP = (R)-pantothenate + AMP + diphosphate + H(+). It carries out the reaction CMP + ATP = CDP + ADP. It catalyses the reaction dCMP + ATP = dCDP + ADP. It functions in the pathway cofactor biosynthesis; (R)-pantothenate biosynthesis; (R)-pantothenate from (R)-pantoate and beta-alanine: step 1/1. In terms of biological role, catalyzes the condensation of pantoate with beta-alanine in an ATP-dependent reaction via a pantoyl-adenylate intermediate. Its function is as follows. Catalyzes the transfer of a phosphate group from ATP to either CMP or dCMP to form CDP or dCDP and ADP, respectively. This Prochlorococcus marinus (strain MIT 9301) protein is Bifunctional pantoate ligase/cytidylate kinase.